Here is a 202-residue protein sequence, read N- to C-terminus: Thymidylate kinase (202 aa).

Residue Gly7–Thr14 participates in ATP binding.

It belongs to the thymidylate kinase family.

The enzyme catalyses dTMP + ATP = dTDP + ADP. In terms of biological role, phosphorylation of dTMP to form dTDP in both de novo and salvage pathways of dTTP synthesis. The polypeptide is Thymidylate kinase (Acinetobacter baylyi (strain ATCC 33305 / BD413 / ADP1)).